A 343-amino-acid polypeptide reads, in one-letter code: MPIDCKAKCGNRASLKRPKTGDALCKDCFFAAFEAEIHHTITTSKLFRRGEKVAVAASGGKDSTVLAHVLKLLNERHNYGLDLVLLSIDEGITGYRDDSLETVKQNRDDYQMPLKILSYEELYGWTMDRIVAQIGRSNNCTFCGVFRRQALDRGAKLLGVDSIATGHNADDIAETVLMNILRGDTARLRRCTDIRTGGGEDSIPRVKPLKYSYEKEIVMYAHYKKLVYFSTECVFAPNAYRGHARAFLKDLEKVRPSVIMDIIYSGEQLRFKDTVKKPVRGNCERCGFVSSQQPCKACVLLEGLNRGLPKLGIGKKSKGDRMIAKQNQELALRERANLVKNDF.

Belongs to the TtcA family. CTU1/NCS6/ATPBD3 subfamily.

The protein resides in the cytoplasm. Its pathway is tRNA modification; 5-methoxycarbonylmethyl-2-thiouridine-tRNA biosynthesis. Its function is as follows. Plays a central role in 2-thiolation of mcm(5)S(2)U at tRNA wobble positions of tRNA(Lys), tRNA(Glu) and tRNA(Gln). Directly binds tRNAs and probably acts by catalyzing adenylation of tRNAs, an intermediate required for 2-thiolation. It is unclear whether it acts as a sulfurtransferase that transfers sulfur from thiocarboxylated URM1 onto the uridine of tRNAs at wobble position. The sequence is that of Cytoplasmic tRNA 2-thiolation protein 1 from Drosophila mojavensis (Fruit fly).